The following is a 189-amino-acid chain: Interferon alpha-C (189 aa).

A signal peptide spans 1-23 (MAPAWSFRLALLLLSCNAICSLG). 2 cysteine pairs are disulfide-bonded: Cys24–Cys122 and Cys52–Cys162.

This sequence belongs to the alpha/beta interferon family.

It is found in the secreted. Its function is as follows. Produced by macrophages, IFN-alpha have antiviral activities. Interferon stimulates the production of two enzymes: a protein kinase and an oligoadenylate synthetase. In Bos taurus (Bovine), this protein is Interferon alpha-C (IFNAC).